A 386-amino-acid chain; its full sequence is Epoxyqueuosine reductase (386 aa).

Residues R57, C97, D134, 139 to 141 (SDR), S152, N155, I158, and L169 each bind cob(II)alamin. D134 functions as the Proton donor in the catalytic mechanism. The 31-residue stretch at 178 to 208 (FEPDVPIEDMCGSCTKCLDACPTGALVNPGQ) folds into the 4Fe-4S ferredoxin-type domain. Residues C188, C191, C194, C198, and C214 each coordinate [4Fe-4S] cluster. Cob(II)alamin is bound at residue S216. Residues Q220 and K222 each contribute to the tRNA site. 3 residues coordinate [4Fe-4S] cluster: C240, C243, and C247. Residue 240–241 (CD) coordinates cob(II)alamin. N280, R281, R295, K297, and K298 together coordinate tRNA. One copy of the HEAT-like PBS-type repeat lies at 333 to 357 (RGTAAWAIGKIGDPAYAEELEKALE).

It belongs to the QueG family. In terms of assembly, monomer. Requires cob(II)alamin as cofactor. [4Fe-4S] cluster is required as a cofactor.

The protein resides in the cytoplasm. The enzyme catalyses epoxyqueuosine(34) in tRNA + AH2 = queuosine(34) in tRNA + A + H2O. The protein operates within tRNA modification; tRNA-queuosine biosynthesis. In terms of biological role, catalyzes the conversion of epoxyqueuosine (oQ) to queuosine (Q), which is a hypermodified base found in the wobble positions of tRNA(Asp), tRNA(Asn), tRNA(His) and tRNA(Tyr). This chain is Epoxyqueuosine reductase, found in Bacillus subtilis (strain 168).